A 347-amino-acid chain; its full sequence is MTDDLAPFDFELPRDHIATEPARPRDSATLLHVRPGLPPDPHVIRDLPDFLREGDLLIANNTAVIRAQLAATRGEAKIGLTLDRILANGSWHALARNSRKLKPQDILHFGDDPVTATVIENEGDGAVSIRFSVEGDEFDAFLERVGALALPPYIERPFGPTKQDDADYRTIFSQYRGAVAAPTAGLHFTPEVLAALDAKGIQRRTLTLHVGAGTFLPVRSTIAEHKMHAEWGEIDAETAAAINETRARGGRIVAVGTTSLRLLESAAREDGTVAPWRGETSIFIKPGYRFKAVDVLMTNFHLPRSTLFMLVCAFSGTETMREAYAYAIANGLRFYSYGDACLLERAP.

The protein belongs to the QueA family. In terms of assembly, monomer.

The protein localises to the cytoplasm. It catalyses the reaction 7-aminomethyl-7-carbaguanosine(34) in tRNA + S-adenosyl-L-methionine = epoxyqueuosine(34) in tRNA + adenine + L-methionine + 2 H(+). Its pathway is tRNA modification; tRNA-queuosine biosynthesis. Transfers and isomerizes the ribose moiety from AdoMet to the 7-aminomethyl group of 7-deazaguanine (preQ1-tRNA) to give epoxyqueuosine (oQ-tRNA). The protein is S-adenosylmethionine:tRNA ribosyltransferase-isomerase of Gluconobacter oxydans (strain 621H) (Gluconobacter suboxydans).